The following is a 565-amino-acid chain: MLKEQFLNAFDHPSRCLFMTLRFRRWFSTTLARLINCNSCGIKLQNENPKTIGYYIKPKKPTVNKLQSLEDVKYLLFSQDLQHVKEQQDVGSLEELNETMESPLICKRCNDALHRNQYDLKEFGRYTITDVLEKIPRGSNILHVVPLPEFPFHFEKSLLEVPHFNTSLLLTKGDQLANDKNTLQRRSLVFFKDFLKYQLGIISNKTVAVSGLKNWNIQSAYAAMNANSYLVGDANVGKSTLINSVMQRYLGYKIHTDRKGQIVTNEPSVKDLKNIKHFFKNQFAGVSHIPNMTRNLQGYRVGDKFIYDLPGFTTNINGAYYEDIIQKDWLERTRKTEKFNTKKLKKQRYISVKGNEKGNCYTVGGIFFWQPPAGTVNQVVSYIPGEGREFADINRGLEVFRACQDDAHPLAKFCGVHPQICQRENYVRHVIPPFQGSIEVVLKDIGYFTIKTTGRYQFKGLHEFWVPRGIDVLVREPLESLISEGSWRHTESKGRVPACPKDRPIVSSTYIVDPEESDLLGKMKEMYLERTSNDISSRRFLYDDPLEVVSKLHEERPNLYWYYRW.

Residues 129–315 form the CP-type G domain; sequence TDVLEKIPRG…IYDLPGFTTN (187 aa).

Belongs to the TRAFAC class YlqF/YawG GTPase family. GEP3 subfamily.

It localises to the mitochondrion. Its function is as follows. May be involved in the mitochondrial lipid metabolism. The chain is Genetic interactor of prohibitins 3, mitochondrial (GEP3) from Zygosaccharomyces rouxii (strain ATCC 2623 / CBS 732 / NBRC 1130 / NCYC 568 / NRRL Y-229).